The chain runs to 396 residues: Elongation factor Tu (396 aa).

The region spanning 10-206 (KPHVNVGTIG…AVDAYIPTPQ (197 aa)) is the tr-type G domain. The tract at residues 19–26 (GHVDHGKT) is G1. A GTP-binding site is contributed by 19-26 (GHVDHGKT). Thr26 contacts Mg(2+). Residues 60-64 (GITIA) form a G2 region. The G3 stretch occupies residues 81–84 (DCPG). GTP is bound by residues 81–85 (DCPGH) and 136–139 (NKVD). Residues 136–139 (NKVD) are G4. Residues 174–176 (SAL) form a G5 region.

Belongs to the TRAFAC class translation factor GTPase superfamily. Classic translation factor GTPase family. EF-Tu/EF-1A subfamily. Monomer.

The protein localises to the cytoplasm. It catalyses the reaction GTP + H2O = GDP + phosphate + H(+). Functionally, GTP hydrolase that promotes the GTP-dependent binding of aminoacyl-tRNA to the A-site of ribosomes during protein biosynthesis. In Anaeromyxobacter dehalogenans (strain 2CP-C), this protein is Elongation factor Tu.